Here is a 356-residue protein sequence, read N- to C-terminus: GMP reductase (356 aa).

Residues 26–27 (SR), lysine 78, 132–134 (DVA), and 183–184 (IG) each bind NADP(+). Residues glycine 184, glycine 186, and cysteine 189 each coordinate K(+). Cysteine 189 functions as the Thioimidate intermediate in the catalytic mechanism. Catalysis depends on threonine 191, which acts as the Proton donor/acceptor. Arginine 192 is a K(+) binding site. GMP contacts are provided by residues 222 to 224 (DGG), 245 to 246 (GG), 271 to 273 (GMS), and 289 to 293 (RASEG). Residues methionine 272, 288–289 (YR), and 317–320 (SACT) contribute to the NADP(+) site.

The protein belongs to the IMPDH/GMPR family.

The enzyme catalyses IMP + NH4(+) + NADP(+) = GMP + NADPH + 2 H(+). Its function is as follows. Catalyzes the irreversible NADPH-dependent deamination of GMP to IMP. It functions in the conversion of nucleobase, nucleoside and nucleotide derivatives of G to A nucleotides, and in maintaining the intracellular balance of A and G nucleotides. The chain is GMP reductase from Ascaris suum (Pig roundworm).